Reading from the N-terminus, the 1436-residue chain is Gag-Pol polyprotein (1436 aa).

Gly-2 is lipidated: N-myristoyl glycine; by host. The segment at 7 to 31 (VLSGGKLDAWEKIRLRPGGKKKYRL) is interaction with Gp41. The interaction with host CALM1 stretch occupies residues 8–43 (LSGGKLDAWEKIRLRPGGKKKYRLKHLVWASRELER). An interaction with host AP3D1 region spans residues 12 to 19 (KLDAWEKI). The segment at 14 to 33 (DAWEKIRLRPGGKKKYRLKH) is interaction with membrane phosphatidylinositol 4,5-bisphosphate and RNA. The Nuclear export signal motif lies at 16 to 22 (WEKIRLR). The Nuclear localization signal signature appears at 26-32 (KKKYRLK). The segment at 73-77 (EELRS) is interaction with membrane phosphatidylinositol 4,5-bisphosphate. Residues 102–129 (EKMEEEQNKSKNKKAQQAAADAGNNSQV) are disordered. Low complexity predominate over residues 116–128 (AQQAAADAGNNSQ). Tyr-133 carries the post-translational modification Phosphotyrosine; by host. The interval 190 to 228 (NTVGGHQAAMQMLKETINEEAAEWDRLHPVHAGPIAPGQ) is interaction with human PPIA/CYPA and NUP153. Positions 278–364 (YSPVSILDIR…GGPSHKARVL (87 aa)) are dimerization/Multimerization of capsid protein p24. 2 CCHC-type zinc fingers span residues 392 to 409 (IKCF…NCRA) and 413 to 430 (KGCW…DCTE). The tract at residues 490 to 494 (PQITL) is dimerization of protease. One can recognise a Peptidase A2 domain in the interval 509–578 (KEALLDTGAD…TPVNIIGRNL (70 aa)). Asp-514 acts as the For protease activity; shared with dimeric partner in catalysis. Dimerization of protease regions lie at residues 538-544 (GIGGFIK) and 577-589 (NLLT…LNFP). The 191-residue stretch at 632–822 (EGKISRVGPE…PPFLWMGYEL (191 aa)) folds into the Reverse transcriptase domain. Mg(2+)-binding residues include Asp-698, Asp-773, and Asp-774. An RT 'primer grip' region spans residues 815–823 (FLWMGYELH). The short motif at 986 to 1002 (WETWWVEYWQATWIPEW) is the Tryptophan repeat motif element. In terms of domain architecture, RNase H type-1 spans 1022–1145 (IIGAETFYVD…VDKLVSQGIR (124 aa)). Residues Asp-1031, Glu-1066, Asp-1086, and Asp-1137 each contribute to the Mg(2+) site. An Integrase-type zinc finger spans residues 1151–1192 (DGIDKAQEEHEKYHNNWRAMASDFNLPPVVAKEIVASCDKCQ). Zn(2+) contacts are provided by His-1160, His-1164, Cys-1188, and Cys-1191. Residues 1202 to 1352 (VDCSPGIWQL…SAGERIIDII (151 aa)) enclose the Integrase catalytic domain. Residues Asp-1212, Asp-1264, and Glu-1300 each contribute to the Mg(2+) site. The segment at residues 1371–1418 (FRVYYRDSRDPIWKGPAKLLWKGEGAVVIQDNSDIKVVPRRKVKIIRD) is a DNA-binding region (integrase-type).

In terms of assembly, homotrimer; further assembles as hexamers of trimers. Interacts with gp41 (via C-terminus). Interacts with host CALM1; this interaction induces a conformational change in the Matrix protein, triggering exposure of the myristate group. Interacts with host AP3D1; this interaction allows the polyprotein trafficking to multivesicular bodies during virus assembly. Part of the pre-integration complex (PIC) which is composed of viral genome, matrix protein, Vpr and integrase. As to quaternary structure, homodimer; the homodimer further multimerizes as homohexamers or homopentamers. Interacts with human PPIA/CYPA; This interaction stabilizes the capsid. Interacts with human NUP153. Interacts with host PDZD8; this interaction stabilizes the capsid. Interacts with monkey TRIM5; this interaction destabilizes the capsid. Homodimer, whose active site consists of two apposed aspartic acid residues. In terms of assembly, heterodimer of p66 RT and p51 RT (RT p66/p51). Heterodimerization of RT is essential for DNA polymerase activity. The overall folding of the subdomains is similar in p66 RT and p51 RT but the spatial arrangements of the subdomains are dramatically different. As to quaternary structure, homotetramer; may further associate as a homohexadecamer. Part of the pre-integration complex (PIC) which is composed of viral genome, matrix protein, Vpr and integrase. Interacts with human SMARCB1/INI1 and human PSIP1/LEDGF isoform 1. Interacts with human KPNA3; this interaction might play a role in nuclear import of the pre-integration complex. Interacts with human NUP153; this interaction might play a role in nuclear import of the pre-integration complex. Requires Mg(2+) as cofactor. Post-translationally, specific enzymatic cleavages by the viral protease yield mature proteins. The protease is released by autocatalytic cleavage. The polyprotein is cleaved during and after budding, this process is termed maturation. Proteolytic cleavage of p66 RT removes the RNase H domain to yield the p51 RT subunit. Nucleocapsid protein p7 might be further cleaved after virus entry. In terms of processing, tyrosine phosphorylated presumably in the virion by a host kinase. Phosphorylation is apparently not a major regulator of membrane association. Phosphorylated possibly by host MAPK1; this phosphorylation is necessary for Pin1-mediated virion uncoating. Post-translationally, methylated by host PRMT6, impairing its function by reducing RNA annealing and the initiation of reverse transcription.

It localises to the host cell membrane. Its subcellular location is the host endosome. The protein resides in the host multivesicular body. It is found in the virion membrane. The protein localises to the host nucleus. It localises to the host cytoplasm. Its subcellular location is the virion. The catalysed reaction is Specific for a P1 residue that is hydrophobic, and P1' variable, but often Pro.. It catalyses the reaction Endohydrolysis of RNA in RNA/DNA hybrids. Three different cleavage modes: 1. sequence-specific internal cleavage of RNA. Human immunodeficiency virus type 1 and Moloney murine leukemia virus enzymes prefer to cleave the RNA strand one nucleotide away from the RNA-DNA junction. 2. RNA 5'-end directed cleavage 13-19 nucleotides from the RNA end. 3. DNA 3'-end directed cleavage 15-20 nucleotides away from the primer terminus.. The enzyme catalyses 3'-end directed exonucleolytic cleavage of viral RNA-DNA hybrid.. It carries out the reaction DNA(n) + a 2'-deoxyribonucleoside 5'-triphosphate = DNA(n+1) + diphosphate. Its activity is regulated as follows. Protease: The viral protease is inhibited by many synthetic protease inhibitors (PIs), such as amprenavir, atazanavir, indinavir, loprinavir, nelfinavir, ritonavir and saquinavir. Use of protease inhibitors in tritherapy regimens permit more ambitious therapeutic strategies. Reverse transcriptase/ribonuclease H: RT can be inhibited either by nucleoside RT inhibitors (NRTIs) or by non nucleoside RT inhibitors (NNRTIs). NRTIs act as chain terminators, whereas NNRTIs inhibit DNA polymerization by binding a small hydrophobic pocket near the RT active site and inducing an allosteric change in this region. Classical NRTIs are abacavir, adefovir (PMEA), didanosine (ddI), lamivudine (3TC), stavudine (d4T), tenofovir (PMPA), zalcitabine (ddC), and zidovudine (AZT). Classical NNRTIs are atevirdine (BHAP U-87201E), delavirdine, efavirenz (DMP-266), emivirine (I-EBU), and nevirapine (BI-RG-587). The tritherapies used as a basic effective treatment of AIDS associate two NRTIs and one NNRTI. Mediates, with Gag polyprotein, the essential events in virion assembly, including binding the plasma membrane, making the protein-protein interactions necessary to create spherical particles, recruiting the viral Env proteins, and packaging the genomic RNA via direct interactions with the RNA packaging sequence (Psi). Gag-Pol polyprotein may regulate its own translation, by the binding genomic RNA in the 5'-UTR. At low concentration, the polyprotein would promote translation, whereas at high concentration, the polyprotein would encapsidate genomic RNA and then shut off translation. Its function is as follows. Targets the polyprotein to the plasma membrane via a multipartite membrane-binding signal, that includes its myristoylated N-terminus. Matrix protein is part of the pre-integration complex. Implicated in the release from host cell mediated by Vpu. Binds to RNA. Functionally, forms the conical core that encapsulates the genomic RNA-nucleocapsid complex in the virion. Most core are conical, with only 7% tubular. The core is constituted by capsid protein hexamer subunits. The core is disassembled soon after virion entry. Host restriction factors such as TRIM5-alpha or TRIMCyp bind retroviral capsids and cause premature capsid disassembly, leading to blocks in reverse transcription. Capsid restriction by TRIM5 is one of the factors which restricts HIV-1 to the human species. Host PIN1 apparently facilitates the virion uncoating. On the other hand, interactions with PDZD8 or CYPA stabilize the capsid. In terms of biological role, encapsulates and protects viral dimeric unspliced genomic RNA (gRNA). Binds these RNAs through its zinc fingers. Acts as a nucleic acid chaperone which is involved in rearangement of nucleic acid secondary structure during gRNA retrotranscription. Also facilitates template switch leading to recombination. As part of the polyprotein, participates in gRNA dimerization, packaging, tRNA incorporation and virion assembly. Aspartyl protease that mediates proteolytic cleavages of Gag and Gag-Pol polyproteins during or shortly after the release of the virion from the plasma membrane. Cleavages take place as an ordered, step-wise cascade to yield mature proteins. This process is called maturation. Displays maximal activity during the budding process just prior to particle release from the cell. Also cleaves Nef and Vif, probably concomitantly with viral structural proteins on maturation of virus particles. Hydrolyzes host EIF4GI and PABP1 in order to shut off the capped cellular mRNA translation. The resulting inhibition of cellular protein synthesis serves to ensure maximal viral gene expression and to evade host immune response. Also mediates cleavage of host YTHDF3. Mediates cleavage of host CARD8, thereby activating the CARD8 inflammasome, leading to the clearance of latent HIV-1 in patient CD4(+) T-cells after viral reactivation; in contrast, HIV-1 can evade CARD8-sensing when its protease remains inactive in infected cells prior to viral budding. Its function is as follows. Multifunctional enzyme that converts the viral RNA genome into dsDNA in the cytoplasm, shortly after virus entry into the cell. This enzyme displays a DNA polymerase activity that can copy either DNA or RNA templates, and a ribonuclease H (RNase H) activity that cleaves the RNA strand of RNA-DNA heteroduplexes in a partially processive 3' to 5' endonucleasic mode. Conversion of viral genomic RNA into dsDNA requires many steps. A tRNA(3)-Lys binds to the primer-binding site (PBS) situated at the 5'-end of the viral RNA. RT uses the 3' end of the tRNA primer to perform a short round of RNA-dependent minus-strand DNA synthesis. The reading proceeds through the U5 region and ends after the repeated (R) region which is present at both ends of viral RNA. The portion of the RNA-DNA heteroduplex is digested by the RNase H, resulting in a ssDNA product attached to the tRNA primer. This ssDNA/tRNA hybridizes with the identical R region situated at the 3' end of viral RNA. This template exchange, known as minus-strand DNA strong stop transfer, can be either intra- or intermolecular. RT uses the 3' end of this newly synthesized short ssDNA to perform the RNA-dependent minus-strand DNA synthesis of the whole template. RNase H digests the RNA template except for two polypurine tracts (PPTs) situated at the 5'-end and near the center of the genome. It is not clear if both polymerase and RNase H activities are simultaneous. RNase H probably can proceed both in a polymerase-dependent (RNA cut into small fragments by the same RT performing DNA synthesis) and a polymerase-independent mode (cleavage of remaining RNA fragments by free RTs). Secondly, RT performs DNA-directed plus-strand DNA synthesis using the PPTs that have not been removed by RNase H as primers. PPTs and tRNA primers are then removed by RNase H. The 3' and 5' ssDNA PBS regions hybridize to form a circular dsDNA intermediate. Strand displacement synthesis by RT to the PBS and PPT ends produces a blunt ended, linear dsDNA copy of the viral genome that includes long terminal repeats (LTRs) at both ends. Functionally, catalyzes viral DNA integration into the host chromosome, by performing a series of DNA cutting and joining reactions. This enzyme activity takes place after virion entry into a cell and reverse transcription of the RNA genome in dsDNA. The first step in the integration process is 3' processing. This step requires a complex comprising the viral genome, matrix protein, Vpr and integrase. This complex is called the pre-integration complex (PIC). The integrase protein removes 2 nucleotides from each 3' end of the viral DNA, leaving recessed CA OH's at the 3' ends. In the second step, the PIC enters cell nucleus. This process is mediated through integrase and Vpr proteins, and allows the virus to infect a non dividing cell. This ability to enter the nucleus is specific of lentiviruses, other retroviruses cannot and rely on cell division to access cell chromosomes. In the third step, termed strand transfer, the integrase protein joins the previously processed 3' ends to the 5' ends of strands of target cellular DNA at the site of integration. The 5'-ends are produced by integrase-catalyzed staggered cuts, 5 bp apart. A Y-shaped, gapped, recombination intermediate results, with the 5'-ends of the viral DNA strands and the 3' ends of target DNA strands remaining unjoined, flanking a gap of 5 bp. The last step is viral DNA integration into host chromosome. This involves host DNA repair synthesis in which the 5 bp gaps between the unjoined strands are filled in and then ligated. Since this process occurs at both cuts flanking the HIV genome, a 5 bp duplication of host DNA is produced at the ends of HIV-1 integration. Alternatively, Integrase may catalyze the excision of viral DNA just after strand transfer, this is termed disintegration. The polypeptide is Gag-Pol polyprotein (gag-pol) (Homo sapiens (Human)).